A 205-amino-acid chain; its full sequence is Protein N-terminal glutamine amidohydrolase (205 aa).

Active-site residues include C28, H81, and D97.

It belongs to the NTAQ1 family. In terms of assembly, monomer.

The protein localises to the cytoplasm. It is found in the cytosol. It localises to the nucleus. It catalyses the reaction N-terminal L-glutaminyl-[protein] + H2O = N-terminal L-glutamyl-[protein] + NH4(+). Mediates the side-chain deamidation of N-terminal glutamine residues to glutamate, an important step in N-end rule pathway of protein degradation. Conversion of the resulting N-terminal glutamine to glutamate renders the protein susceptible to arginylation, polyubiquitination and degradation as specified by the N-end rule. Does not act on substrates with internal or C-terminal glutamine and does not act on non-glutamine residues in any position. Does not deaminate acetylated N-terminal glutamine. With the exception of proline, all tested second-position residues on substrate peptides do not greatly influence the activity. In contrast, a proline at position 2, virtually abolishes deamidation of N-terminal glutamine. This Homo sapiens (Human) protein is Protein N-terminal glutamine amidohydrolase.